The primary structure comprises 270 residues: Acyl-[acyl-carrier-protein]--UDP-N-acetylglucosamine O-acyltransferase (270 aa).

Residues 69–72, histidine 121, histidine 140, and glutamine 157 contribute to the substrate site; that span reads QDLK.

This sequence belongs to the transferase hexapeptide repeat family. LpxA subfamily. In terms of assembly, homotrimer.

Its subcellular location is the cytoplasm. The catalysed reaction is a (3R)-hydroxyacyl-[ACP] + UDP-N-acetyl-alpha-D-glucosamine = a UDP-3-O-[(3R)-3-hydroxyacyl]-N-acetyl-alpha-D-glucosamine + holo-[ACP]. It participates in glycolipid biosynthesis; lipid IV(A) biosynthesis; lipid IV(A) from (3R)-3-hydroxytetradecanoyl-[acyl-carrier-protein] and UDP-N-acetyl-alpha-D-glucosamine: step 1/6. Its function is as follows. Involved in the biosynthesis of lipid A, a phosphorylated glycolipid that anchors the lipopolysaccharide to the outer membrane of the cell. The protein is Acyl-[acyl-carrier-protein]--UDP-N-acetylglucosamine O-acyltransferase of Helicobacter pylori (strain ATCC 700392 / 26695) (Campylobacter pylori).